The sequence spans 454 residues: Putative F-box/LRR-repeat protein At3g58880 (454 aa).

Residues 2-48 enclose the F-box domain; that stretch reads VDLVSSLPDDLLGHILSLLTTKEAALTSILSKRWRYLIAFVPYLEFD. 7 LRR repeats span residues 77–102, 144–168, 169–194, 214–240, 270–301, 303–327, and 328–353; these read LALH…DLLN, SGCR…TLDS, VSWS…NLAN, IKSV…NYTA, LVSV…YLSP, TLQV…VIES, and SMDI…VIKG.

The sequence is that of Putative F-box/LRR-repeat protein At3g58880 from Arabidopsis thaliana (Mouse-ear cress).